A 202-amino-acid chain; its full sequence is Putative pituitary tumor-transforming gene 3 protein (202 aa).

Positions arginine 61–leucine 64 match the D-box motif. Positions valine 67–lysine 92 are disordered. The SH3-binding motif lies at proline 163–proline 173.

This sequence belongs to the securin family.

It is found in the cytoplasm. The protein resides in the nucleus. The protein is Putative pituitary tumor-transforming gene 3 protein (PTTG3) of Pongo pygmaeus (Bornean orangutan).